The sequence spans 555 residues: Acetyl-coenzyme A thioesterase (555 aa).

A HotDog ACOT-type 1 domain is found at 5–117 (APGEVVMSQA…FSTFVAKPVG (113 aa)). The residue at position 33 (Lys33) is an N6-succinyllysine. CoA-binding positions include 53 to 55 (TAS), 82 to 84 (STS), and Arg144. N6-succinyllysine is present on residues Lys159 and Lys228. The HotDog ACOT-type 2 domain occupies 179–294 (RGTSVQSIEL…FLIYNAADDK (116 aa)). A CoA-binding site is contributed by 234–236 (KFR). The START domain occupies 340 to 549 (CIHWDISKQA…IQFLENPPDD (210 aa)).

As to quaternary structure, homodimer or homotetramer.

It localises to the cytoplasm. Its subcellular location is the cytosol. The enzyme catalyses acetyl-CoA + H2O = acetate + CoA + H(+). The catalysed reaction is butanoyl-CoA + H2O = butanoate + CoA + H(+). It carries out the reaction hexanoyl-CoA + H2O = hexanoate + CoA + H(+). It functions in the pathway lipid metabolism; fatty acid metabolism. Inhibited by ADP. Active in the presence of ATP. Cold labile, it dissociates into inactive monomers at low temperature. Functionally, catalyzes the hydrolysis of acyl-CoAs into free fatty acids and coenzyme A (CoASH), regulating their respective intracellular levels. Preferentially hydrolyzes acetyl-CoA. This is Acetyl-coenzyme A thioesterase (ACOT12) from Homo sapiens (Human).